A 204-amino-acid polypeptide reads, in one-letter code: CASP-like protein 2U2 (204 aa).

At 1-36 (MGVLGGDAHVPIGSQVSPGSVVVTNNESFGHRKLLK) the chain is on the cytoplasmic side. The helical transmembrane segment at 37 to 57 (GVDFLVRIKAFAFCLAVIVLL) threads the bilayer. The Extracellular portion of the chain corresponds to 58-84 (KNNVQTTVIAPGIVLQAKYNNTKAPVS). An N-linked (GlcNAc...) asparagine glycan is attached at Asn-77. Residues 85–105 (LLVLASICCGYAFLQAVVSLL) traverse the membrane as a helical segment. Residues 106 to 117 (SFIRDKRVLNNT) are Cytoplasmic-facing. The helical transmembrane segment at 118 to 138 (VLAWLTFLLDQVLTYLLLGSA) threads the bilayer. The Extracellular portion of the chain corresponds to 139 to 170 (AATAEAAYIAKRGEDKVQWKAVCGPFKRFCDH). A helical transmembrane segment spans residues 171 to 191 (FAATVFLSFIAVIAFAVSAAI). Residues 192-204 (SAYYLFRKSKGFK) are Cytoplasmic-facing.

The protein belongs to the Casparian strip membrane proteins (CASP) family. In terms of assembly, homodimer and heterodimers.

It localises to the cell membrane. The protein is CASP-like protein 2U2 of Selaginella moellendorffii (Spikemoss).